The sequence spans 320 residues: Acetyl-coenzyme A carboxylase carboxyl transferase subunit beta (320 aa).

Positions 25 to 294 constitute a CoA carboxyltransferase N-terminal domain; that stretch reads VWTKCDSCGQ…AKDEDELLGE (270 aa). Cys29, Cys32, Cys48, and Cys51 together coordinate Zn(2+). Residues 29–51 form a C4-type zinc finger; sequence CDSCGQVLYRAELERNLEVCPKC. A compositionally biased stretch (acidic residues) spans 295-310; the sequence is EMIADDIESSDNEPEI. Positions 295–320 are disordered; the sequence is EMIADDIESSDNEPEINIETNKKEDV.

It belongs to the AccD/PCCB family. Acetyl-CoA carboxylase is a heterohexamer composed of biotin carboxyl carrier protein (AccB), biotin carboxylase (AccC) and two subunits each of ACCase subunit alpha (AccA) and ACCase subunit beta (AccD). The cofactor is Zn(2+).

It localises to the cytoplasm. The enzyme catalyses N(6)-carboxybiotinyl-L-lysyl-[protein] + acetyl-CoA = N(6)-biotinyl-L-lysyl-[protein] + malonyl-CoA. Its pathway is lipid metabolism; malonyl-CoA biosynthesis; malonyl-CoA from acetyl-CoA: step 1/1. Its function is as follows. Component of the acetyl coenzyme A carboxylase (ACC) complex. Biotin carboxylase (BC) catalyzes the carboxylation of biotin on its carrier protein (BCCP) and then the CO(2) group is transferred by the transcarboxylase to acetyl-CoA to form malonyl-CoA. This Proteus mirabilis (strain HI4320) protein is Acetyl-coenzyme A carboxylase carboxyl transferase subunit beta.